A 164-amino-acid chain; its full sequence is Transcription antitermination protein NusB (164 aa).

The protein belongs to the NusB family.

Involved in transcription antitermination. Required for transcription of ribosomal RNA (rRNA) genes. Binds specifically to the boxA antiterminator sequence of the ribosomal RNA (rrn) operons. This is Transcription antitermination protein NusB from Mycolicibacterium gilvum (strain PYR-GCK) (Mycobacterium gilvum (strain PYR-GCK)).